Reading from the N-terminus, the 376-residue chain is Glucose-1-phosphate adenylyltransferase (376 aa).

Alpha-D-glucose 1-phosphate contacts are provided by residues Y101, G166, 181–182, and S192; that span reads EK.

The protein belongs to the bacterial/plant glucose-1-phosphate adenylyltransferase family. In terms of assembly, homotetramer.

It carries out the reaction alpha-D-glucose 1-phosphate + ATP + H(+) = ADP-alpha-D-glucose + diphosphate. Its pathway is glycan biosynthesis; glycogen biosynthesis. Functionally, involved in the biosynthesis of ADP-glucose, a building block required for the elongation reactions to produce glycogen. Catalyzes the reaction between ATP and alpha-D-glucose 1-phosphate (G1P) to produce pyrophosphate and ADP-Glc. This chain is Glucose-1-phosphate adenylyltransferase, found in Bacillus cereus (strain ATCC 14579 / DSM 31 / CCUG 7414 / JCM 2152 / NBRC 15305 / NCIMB 9373 / NCTC 2599 / NRRL B-3711).